A 123-amino-acid polypeptide reads, in one-letter code: Large ribosomal subunit protein bL12 (123 aa).

It belongs to the bacterial ribosomal protein bL12 family. In terms of assembly, homodimer. Part of the ribosomal stalk of the 50S ribosomal subunit. Forms a multimeric L10(L12)X complex, where L10 forms an elongated spine to which 2 to 4 L12 dimers bind in a sequential fashion. Binds GTP-bound translation factors.

Forms part of the ribosomal stalk which helps the ribosome interact with GTP-bound translation factors. Is thus essential for accurate translation. In Shewanella sp. (strain ANA-3), this protein is Large ribosomal subunit protein bL12.